The following is an 85-amino-acid chain: MTKVVNNLQDIFLNGARKNRIPVTIYLTNGFQLKGFVKGFDNFTVILDSDGKQMMIYKHAISTINPAKPLLFVQNPNGDDYKDKE.

A Sm domain is found at 10–70 (DIFLNGARKN…ISTINPAKPL (61 aa)).

The protein belongs to the Hfq family. As to quaternary structure, homohexamer.

In terms of biological role, RNA chaperone that binds small regulatory RNA (sRNAs) and mRNAs to facilitate mRNA translational regulation in response to envelope stress, environmental stress and changes in metabolite concentrations. Also binds with high specificity to tRNAs. This is RNA-binding protein Hfq from Clostridium botulinum (strain 657 / Type Ba4).